The primary structure comprises 1460 residues: CLIP-associating protein 1-A (1460 aa).

HEAT repeat units follow at residues 87–124 (TQLGTVLPSLMDRLGDAKDSVREQDQSLLIKIMEQASN) and 163–200 (LTLSKIVPHICNLLGDPNSQVRDAAINCLVEIYRHVGE). The segment at 237–293 (SDKNFDDEDSVDGNRPSSASSSASSKAPQTARRGVSLGTARRPGPSSAAAKTGGTAK) is disordered. Over residues 279 to 293 (PGPSSAAAKTGGTAK) the composition is skewed to low complexity. HEAT repeat units follow at residues 407–442 (HGAEAIMPTVFNLVPNSAKIMATSGIVAIRLIIRHT) and 443–479 (HVPRLIPIITSNCTSKSVAVRRRCYDFLDLLLQEWQT). Disordered regions lie at residues 545 to 605 (SDSI…IDVN), 640 to 733 (IRTR…RFGI), and 778 to 800 (PYGMYSDDDANSDASSACSERSY). A compositionally biased stretch (low complexity) spans 550–569 (SLPQSDRSSSSSQESLNRPL). Over residues 571-597 (TKRSPTGSTVSRASSTTSKSTPGSLQR) the composition is skewed to polar residues. Positions 645 to 659 (QSSGSTTSTASTPAD) are enriched in low complexity. Polar residues-rich tracts occupy residues 669 to 681 (VSQSQPGSRSNSP) and 715 to 724 (QGCSRETSPS). Over residues 789–800 (SDASSACSERSY) the composition is skewed to low complexity. The HEAT 5 repeat unit spans residues 942–979 (FIVDQTQTPNLKVKVAILKYIESLARQMDPTDFVNSSE). The disordered stretch occupies residues 1041–1084 (LKNSSNSSMGSPSNTIGRTPSRHSSSRASPLTSPTNCSHGGLSP). The span at 1042 to 1054 (KNSSNSSMGSPSN) shows a compositional bias: low complexity. Over residues 1066–1078 (SRASPLTSPTNCS) the composition is skewed to polar residues. HEAT repeat units follow at residues 1272 to 1309 (LLLETLGDKDHAIRALALRVLREILRNQPARFKNYAEL) and 1390 to 1427 (GLLQGYDNTESSVRKASVFCLVAIYSVIGEELKPYLAQ).

This sequence belongs to the CLASP family.

The protein resides in the cytoplasm. Its subcellular location is the cytoskeleton. It localises to the microtubule organizing center. The protein localises to the centrosome. It is found in the chromosome. The protein resides in the centromere. Its subcellular location is the kinetochore. It localises to the spindle. The protein localises to the golgi apparatus. It is found in the trans-Golgi network. In terms of biological role, microtubule plus-end tracking protein that promotes the stabilization of dynamic microtubules during anaphase. Plays a crucial role in chromatin-induced microtubule formation. May also act at microtubule minus ends. May be involved in the nucleation of noncentrosomal microtubules originating from the trans-Golgi network (TGN). The protein is CLIP-associating protein 1-A (clasp1-a) of Xenopus laevis (African clawed frog).